We begin with the raw amino-acid sequence, 324 residues long: Homeobox protein engrailed-2 (324 aa).

3 disordered regions span residues 1 to 59 (MEEK…HQHP), 89 to 174 (GGAR…VLKA), and 215 to 240 (DRPS…RPRT). Gly residues predominate over residues 89-110 (GGARGGEGGAGTTEGGGGGAGG). Positions 235–294 (DKRPRTAFTAEQLQRLKAEFQTNRYLTEQRRQSLAQELSLNESQIKIWFQNKRAKIKKAT) form a DNA-binding region, homeobox.

This sequence belongs to the engrailed homeobox family. Cerebellar granule cells.

It is found in the nucleus. This Mus musculus (Mouse) protein is Homeobox protein engrailed-2 (En2).